We begin with the raw amino-acid sequence, 344 residues long: Probable pectinesterase 67 (344 aa).

The signal sequence occupies residues 1–23; that stretch reads MGHRTRMILVLTLVVMSIWGSDA. 2 N-linked (GlcNAc...) asparagine glycosylation sites follow: asparagine 43 and asparagine 151. Glutamine 152 provides a ligand contact to substrate. Residue aspartate 196 is the Nucleophile of the active site. Substrate is bound at residue arginine 256. Asparagine 282 carries N-linked (GlcNAc...) asparagine glycosylation.

Belongs to the pectinesterase family. In terms of tissue distribution, expressed in flower buds.

The protein localises to the secreted. It localises to the cell wall. It carries out the reaction [(1-&gt;4)-alpha-D-galacturonosyl methyl ester](n) + n H2O = [(1-&gt;4)-alpha-D-galacturonosyl](n) + n methanol + n H(+). Its pathway is glycan metabolism; pectin degradation; 2-dehydro-3-deoxy-D-gluconate from pectin: step 1/5. Functionally, acts in the modification of cell walls via demethylesterification of cell wall pectin. This chain is Probable pectinesterase 67 (PME67), found in Arabidopsis thaliana (Mouse-ear cress).